Here is a 94-residue protein sequence, read N- to C-terminus: Acylphosphatase (94 aa).

The Acylphosphatase-like domain maps to Arg-3 to Tyr-90. Catalysis depends on residues Arg-18 and Asn-36.

Belongs to the acylphosphatase family.

The catalysed reaction is an acyl phosphate + H2O = a carboxylate + phosphate + H(+). The chain is Acylphosphatase (acyP) from Geobacillus kaustophilus (strain HTA426).